Here is a 328-residue protein sequence, read N- to C-terminus: Formimidoylglutamase (328 aa).

Mn(2+) contacts are provided by histidine 133, aspartate 159, histidine 161, aspartate 163, aspartate 253, and aspartate 255.

Belongs to the arginase family. Mn(2+) is required as a cofactor.

It carries out the reaction N-formimidoyl-L-glutamate + H2O = formamide + L-glutamate. It functions in the pathway amino-acid degradation; L-histidine degradation into L-glutamate; L-glutamate from N-formimidoyl-L-glutamate (hydrolase route): step 1/1. Its function is as follows. Catalyzes the conversion of N-formimidoyl-L-glutamate to L-glutamate and formamide. This Streptococcus pyogenes serotype M28 (strain MGAS6180) protein is Formimidoylglutamase.